Reading from the N-terminus, the 234-residue chain is Glucosamine-6-phosphate deaminase (234 aa).

D62 (proton acceptor; for enolization step) is an active-site residue. N128 acts as the For ring-opening step in catalysis. H130 acts as the Proton acceptor; for ring-opening step in catalysis. The active-site For ring-opening step is the E135.

Belongs to the glucosamine/galactosamine-6-phosphate isomerase family. NagB subfamily.

The catalysed reaction is alpha-D-glucosamine 6-phosphate + H2O = beta-D-fructose 6-phosphate + NH4(+). It functions in the pathway amino-sugar metabolism; N-acetylneuraminate degradation; D-fructose 6-phosphate from N-acetylneuraminate: step 5/5. Functionally, catalyzes the reversible isomerization-deamination of glucosamine 6-phosphate (GlcN6P) to form fructose 6-phosphate (Fru6P) and ammonium ion. This chain is Glucosamine-6-phosphate deaminase, found in Streptococcus uberis (strain ATCC BAA-854 / 0140J).